The sequence spans 118 residues: NADH-ubiquinone oxidoreductase chain 3 (118 aa).

3 helical membrane passes run 1–21 (MLFF…VLVF), 59–79 (YTYF…SLLL), and 86–106 (VLYK…IGFL).

It belongs to the complex I subunit 3 family.

Its subcellular location is the mitochondrion membrane. It carries out the reaction a ubiquinone + NADH + 5 H(+)(in) = a ubiquinol + NAD(+) + 4 H(+)(out). Functionally, core subunit of the mitochondrial membrane respiratory chain NADH dehydrogenase (Complex I) that is believed to belong to the minimal assembly required for catalysis. Complex I functions in the transfer of electrons from NADH to the respiratory chain. The immediate electron acceptor for the enzyme is believed to be ubiquinone. This Fasciola hepatica (Liver fluke) protein is NADH-ubiquinone oxidoreductase chain 3 (ND3).